The primary structure comprises 104 residues: Large ribosomal subunit protein bL21 (104 aa).

The protein belongs to the bacterial ribosomal protein bL21 family. Part of the 50S ribosomal subunit. Contacts protein L20.

Functionally, this protein binds to 23S rRNA in the presence of protein L20. This chain is Large ribosomal subunit protein bL21, found in Thermotoga petrophila (strain ATCC BAA-488 / DSM 13995 / JCM 10881 / RKU-1).